Reading from the N-terminus, the 141-residue chain is Hemoglobin subunit alpha-A (141 aa).

A Globin domain is found at Val1–Arg141. His58 is a binding site for O2. His87 contributes to the heme b binding site.

The protein belongs to the globin family. As to quaternary structure, heterotetramer of two alpha chains and two beta chains. Red blood cells.

Involved in oxygen transport from the lung to the various peripheral tissues. In Phoenicopterus ruber (American flamingo), this protein is Hemoglobin subunit alpha-A (HBAA).